The following is a 159-amino-acid chain: Phosphopantetheine adenylyltransferase (159 aa).

Ser-10 contributes to the substrate binding site. ATP is bound by residues 10-11 and His-18; that span reads SF. Substrate is bound by residues Lys-42, Leu-77, and Lys-91. Residues 92–94, Glu-102, and 126–132 each bind ATP; these read GIR and NAHVSSS.

It belongs to the bacterial CoaD family. In terms of assembly, homohexamer. Mg(2+) serves as cofactor.

Its subcellular location is the cytoplasm. The enzyme catalyses (R)-4'-phosphopantetheine + ATP + H(+) = 3'-dephospho-CoA + diphosphate. Its pathway is cofactor biosynthesis; coenzyme A biosynthesis; CoA from (R)-pantothenate: step 4/5. Reversibly transfers an adenylyl group from ATP to 4'-phosphopantetheine, yielding dephospho-CoA (dPCoA) and pyrophosphate. The sequence is that of Phosphopantetheine adenylyltransferase from Leifsonia xyli subsp. xyli (strain CTCB07).